The following is a 217-amino-acid chain: Probable nicotinate-nucleotide adenylyltransferase (217 aa).

The protein belongs to the NadD family.

The enzyme catalyses nicotinate beta-D-ribonucleotide + ATP + H(+) = deamido-NAD(+) + diphosphate. It functions in the pathway cofactor biosynthesis; NAD(+) biosynthesis; deamido-NAD(+) from nicotinate D-ribonucleotide: step 1/1. In terms of biological role, catalyzes the reversible adenylation of nicotinate mononucleotide (NaMN) to nicotinic acid adenine dinucleotide (NaAD). The polypeptide is Probable nicotinate-nucleotide adenylyltransferase (Baumannia cicadellinicola subsp. Homalodisca coagulata).